Consider the following 130-residue polypeptide: Small ribosomal subunit protein uS9 (130 aa).

Residues 98-130 (LKRAGLLTRDPRMKERKKPGLKKARRSPQFSKR) form a disordered region. A compositionally biased stretch (basic residues) spans 111 to 130 (KERKKPGLKKARRSPQFSKR).

Belongs to the universal ribosomal protein uS9 family.

This Staphylococcus carnosus (strain TM300) protein is Small ribosomal subunit protein uS9 (rpsI).